The sequence spans 556 residues: 5-aminolevulinate synthase, mitochondrial (556 aa).

Residues 1-46 (MDSLARQSAKICPFVSRVTSSMQQVQVLHKTNMSAMAQQCPVMRRA) constitute a mitochondrion transit peptide. Positions 105, 218, and 237 each coordinate substrate. 3 residues coordinate pyridoxal 5'-phosphate: serine 270, histidine 298, and threonine 342. Residue lysine 345 is part of the active site. The residue at position 345 (lysine 345) is an N6-(pyridoxal phosphate)lysine. Pyridoxal 5'-phosphate contacts are provided by threonine 374 and serine 375. Threonine 460 lines the substrate pocket.

It belongs to the class-II pyridoxal-phosphate-dependent aminotransferase family. In terms of assembly, homodimer. Pyridoxal 5'-phosphate serves as cofactor.

The protein localises to the mitochondrion matrix. It catalyses the reaction succinyl-CoA + glycine + H(+) = 5-aminolevulinate + CO2 + CoA. It functions in the pathway porphyrin-containing compound metabolism; protoporphyrin-IX biosynthesis; 5-aminolevulinate from glycine: step 1/1. In terms of biological role, catalyzes the synthesis of 5-aminolevulinate (ALA) from succinyl-CoA and glycine, the first and rate-limiting step in heme biosynthesis. The polypeptide is 5-aminolevulinate synthase, mitochondrial (HEM1) (Eremothecium gossypii (strain ATCC 10895 / CBS 109.51 / FGSC 9923 / NRRL Y-1056) (Yeast)).